Here is a 427-residue protein sequence, read N- to C-terminus: MNNKNIDIIQLLYERDLIAQITNQEALIKILKSKSITLYCGFDPTSDSLHIGHLVPLLCLRQFQIFGHRPIILLGGGTGLIGDPSFKDSERKLNLIETVQKWIEKIKYQVSLFVDFSHSQYSQACIVNNYDWLSSISLLTFLRDIGKFFSVNKMINKDAIKKRLQKNNYGISYTEFSYNLLQSYDFTYLHKNYNAILQIGGSDQWGNIISGIDLIHRIYKRTTYGLTMPLLTKSDNTKFGKTEKHTIWLDAKKTSPYTFYQYWINTSDEEVYRFLKFFTNIDVDAINTLKKEDKMKNTKPQAQIILAEEITRLVHGKSGLKTAQKITRNLFTGQIHKLTLDDFEQLFQDGIPTVPLKAGITLQQALVESKLVVSRAQARELISSNSITVNSKKQLKTEYIFCATDRLYNRFTLLRRGKKHHCLITWE.

Position 39 (tyrosine 39) interacts with L-tyrosine. The short motif at 44-53 (PTSDSLHIGH) is the 'HIGH' region element. Tyrosine 178 and glutamine 182 together coordinate L-tyrosine. The 'KMSKS' region signature appears at 238–242 (KFGKT). Lysine 241 lines the ATP pocket. The region spanning 360–417 (ITLQQALVESKLVVSRAQARELISSNSITVNSKKQLKTEYIFCATDRLYNRFTLLRRG) is the S4 RNA-binding domain.

This sequence belongs to the class-I aminoacyl-tRNA synthetase family. TyrS type 1 subfamily. Homodimer.

It localises to the cytoplasm. It catalyses the reaction tRNA(Tyr) + L-tyrosine + ATP = L-tyrosyl-tRNA(Tyr) + AMP + diphosphate + H(+). In terms of biological role, catalyzes the attachment of tyrosine to tRNA(Tyr) in a two-step reaction: tyrosine is first activated by ATP to form Tyr-AMP and then transferred to the acceptor end of tRNA(Tyr). This is Tyrosine--tRNA ligase from Blochmanniella pennsylvanica (strain BPEN).